The primary structure comprises 643 residues: MPIITLPDGSQRQFDRPVSVLEVAQDIGAGLAKATIAGRVNGERRDACYVIEQDATLEIITAKDEDGLEIIRHSCAHLLGHAIKQLFPDVKMAIGPTIENGFYYDVDLDRSLTQEDIDAIEKRMLELAKTNYDVVKKRVTWQEARDTFEKRGEPYKMAILDENIERTATPALYHHLEYIDMCRGPHVPNMRFCQHFKLQKVAGAYWRGDSKNKMLQRIYGTAWADKKQLAEYLTRLEEAAKRDHRKIGKALDLYHMQEEAPGMVFWHNDGWTIFRELETFVRTKLKQYDYQEVKGPFMMDRVLWEKTGHWQNYADLMFTTQSENREYAIKPMNCPGHVQIFNQGLKSYRDLPIRMAEFGSCHRNEPSGSLHGLMRVRGFTQDDAHIFCTEDQIESEVTSCIKMVYDIYSTFGFTNIAVKLSTRPENRIGSDEMWDRAEAGLAAALAHNGLEYEIQEGEGAFYGPKIEFALRDCLGREWQCGTVQLDFALPGRLDATYVAEDNSRKTPVMIHRAILGSIERFIGIITEEYAGFFPAWLAPTQAVVMNITDSQADYVQKVAKQLSDVGLRVKTDLRNEKVGFKIREHTLRRVPYMLVCGDKEIAEGKVAVRTRKGADLGTFTVEEFAEILKNQVRSRELKLLNEE.

Residues Met-1–Thr-61 enclose the TGS domain. Residues Asp-243–Pro-534 are catalytic. Cys-334, His-385, and His-511 together coordinate Zn(2+).

Belongs to the class-II aminoacyl-tRNA synthetase family. Homodimer. Zn(2+) serves as cofactor.

The protein resides in the cytoplasm. The enzyme catalyses tRNA(Thr) + L-threonine + ATP = L-threonyl-tRNA(Thr) + AMP + diphosphate + H(+). Functionally, catalyzes the attachment of threonine to tRNA(Thr) in a two-step reaction: L-threonine is first activated by ATP to form Thr-AMP and then transferred to the acceptor end of tRNA(Thr). Also edits incorrectly charged L-seryl-tRNA(Thr). The chain is Threonine--tRNA ligase from Haemophilus influenzae (strain ATCC 51907 / DSM 11121 / KW20 / Rd).